Reading from the N-terminus, the 733-residue chain is Ribosomal protein S6 kinase alpha-2 (733 aa).

In terms of domain architecture, Protein kinase 1 spans 59-318; it reads FELLKVLGQG…VEEIKRHPFF (260 aa). Residues 65 to 73 and K91 each bind ATP; that span reads LGQGSYGKV. D184 functions as the Proton acceptor in the catalytic mechanism. Phosphoserine; by PDPK1 is present on S218. The AGC-kinase C-terminal domain occupies 319-388; sequence VTIDWNTLYR…VASSLIQEPS (70 aa). Residue S377 is modified to Phosphoserine. Residues 415–672 form the Protein kinase 2 domain; it reads YEIKEDIGVG…AMQVLKHPWV (258 aa). ATP contacts are provided by residues 421 to 429 and K444; that span reads IGVGSYSVC. D532 serves as the catalytic Proton acceptor.

This sequence belongs to the protein kinase superfamily. AGC Ser/Thr protein kinase family. S6 kinase subfamily. In terms of assembly, forms a complex with either MAPK1/ERK2 or MAPK3/ERK1 in quiescent cells. Transiently dissociates following mitogenic stimulation. Interacts with FBXO5; cooperate to induce the metaphase arrest of early blastomeres; increases and stabilizes interaction of FBXO5 with CDC20. Requires Mg(2+) as cofactor. In terms of processing, activated by phosphorylation at Ser-218 by PDPK1. Autophosphorylated on Ser-377, as part of the activation process. May be phosphorylated at Thr-356 and Ser-360 by MAPK1/ERK2 and MAPK3/ERK1. N-terminal myristoylation results in an activated kinase in the absence of added growth factors. As to expression, widely expressed with higher expression in lung, skeletal muscle, brain, uterus, ovary, thyroid and prostate.

The protein localises to the nucleus. The protein resides in the cytoplasm. It carries out the reaction L-seryl-[protein] + ATP = O-phospho-L-seryl-[protein] + ADP + H(+). The catalysed reaction is L-threonyl-[protein] + ATP = O-phospho-L-threonyl-[protein] + ADP + H(+). Upon extracellular signal or mitogen stimulation, phosphorylated at Thr-570 in the C-terminal kinase domain (CTKD) by MAPK1/ERK2 and MAPK3/ERK1. The activated CTKD then autophosphorylates Ser-377, allowing binding of PDPK1, which in turn phosphorylates Ser-218 in the N-terminal kinase domain (NTDK) leading to the full activation of the protein and subsequent phosphorylation of the substrates by the NTKD. Serine/threonine-protein kinase that acts downstream of ERK (MAPK1/ERK2 and MAPK3/ERK1) signaling and mediates mitogenic and stress-induced activation of transcription factors, regulates translation, and mediates cellular proliferation, survival, and differentiation. May function as tumor suppressor in epithelial ovarian cancer cells. The protein is Ribosomal protein S6 kinase alpha-2 (RPS6KA2) of Homo sapiens (Human).